The sequence spans 476 residues: Probable cytosolic Fe-S cluster assembly factor GH10760 (476 aa).

[4Fe-4S] cluster-binding residues include cysteine 23, cysteine 68, cysteine 71, cysteine 74, cysteine 187, cysteine 243, cysteine 395, and cysteine 399.

Belongs to the NARF family.

Component of the cytosolic iron-sulfur (Fe/S) protein assembly machinery. Required for maturation of extramitochondrial Fe/S proteins. This Drosophila grimshawi (Hawaiian fruit fly) protein is Probable cytosolic Fe-S cluster assembly factor GH10760.